A 541-amino-acid chain; its full sequence is Chaperonin GroEL (541 aa).

ATP-binding positions include 29–32, 86–90, glycine 413, 478–480, and aspartate 494; these read TLGP, DGTTT, and NAA.

This sequence belongs to the chaperonin (HSP60) family. Forms a cylinder of 14 subunits composed of two heptameric rings stacked back-to-back. Interacts with the co-chaperonin GroES.

It localises to the cytoplasm. The enzyme catalyses ATP + H2O + a folded polypeptide = ADP + phosphate + an unfolded polypeptide.. Its function is as follows. Together with its co-chaperonin GroES, plays an essential role in assisting protein folding. The GroEL-GroES system forms a nano-cage that allows encapsulation of the non-native substrate proteins and provides a physical environment optimized to promote and accelerate protein folding. This chain is Chaperonin GroEL, found in Agathobacter rectalis (strain ATCC 33656 / DSM 3377 / JCM 17463 / KCTC 5835 / VPI 0990) (Eubacterium rectale).